Here is a 150-residue protein sequence, read N- to C-terminus: UPF0756 membrane protein PC1_1142 (150 aa).

The next 4 helical transmembrane spans lie at 1-21 (MAYLDPTLLILLVLAGLGIIS), 51-71 (YGLSIGIVILTIGVMAPIASG), 82-102 (FLHWKSLLAILIGVAVSWLGG), and 127-147 (ALFRGVPVGPLIAAGLLSLLI).

Belongs to the UPF0756 family.

Its subcellular location is the cell membrane. In Pectobacterium carotovorum subsp. carotovorum (strain PC1), this protein is UPF0756 membrane protein PC1_1142.